The primary structure comprises 113 residues: Large ribosomal subunit protein eL34 (113 aa).

Belongs to the eukaryotic ribosomal protein eL34 family.

The sequence is that of Large ribosomal subunit protein eL34 from Methanopyrus kandleri (strain AV19 / DSM 6324 / JCM 9639 / NBRC 100938).